The sequence spans 52 residues: Histone H2A (52 aa).

Positions 1-25 (MSGRGKTGGKARAKAKTRSSRAGLQ) are disordered. The residue at position 2 (serine 2) is an N-acetylserine. Residue serine 2 is modified to Phosphoserine. The residue at position 6 (lysine 6) is an N6-(2-hydroxyisobutyryl)lysine. An N6-acetyllysine modification is found at lysine 6. Over residues 7 to 19 (TGGKARAKAKTRS) the composition is skewed to basic residues. Lysine 10 carries the post-translational modification N6-(2-hydroxyisobutyryl)lysine; alternate. Lysine 10 carries the post-translational modification N6-lactoyllysine; alternate. Lysine 10 is subject to N6-succinyllysine. Residues lysine 14 and lysine 16 each participate in a glycyl lysine isopeptide (Lys-Gly) (interchain with G-Cter in ubiquitin) cross-link. Residue lysine 37 is modified to N6-(2-hydroxyisobutyryl)lysine; alternate.

As to quaternary structure, the nucleosome is a histone octamer containing two molecules each of H2A, H2B, H3 and H4 assembled in one H3-H4 heterotetramer and two H2A-H2B heterodimers. The octamer wraps approximately 147 bp of DNA. Post-translationally, acetylation is not necessary for the antibacterial activity. In terms of processing, monoubiquitination in C-terminus gives a specific tag for epigenetic transcriptional repression. Following DNA double-strand breaks (DSBs), it is ubiquitinated through 'Lys-63' linkage of ubiquitin moieties, leading to the recruitment of repair proteins to sites of DNA damage. H2AK119Ub and ionizing radiation-induced 'Lys-63'-linked ubiquitination are distinct events. Phosphorylation on Ser-2 is enhanced during mitosis. Phosphorylation on Ser-2 directly represses transcription.

Its subcellular location is the nucleus. The protein resides in the chromosome. It localises to the secreted. In terms of biological role, core component of nucleosome. Nucleosomes wrap and compact DNA into chromatin, limiting DNA accessibility to the cellular machineries which require DNA as a template. Histones thereby play a central role in transcription regulation, DNA repair, DNA replication and chromosomal stability. DNA accessibility is regulated via a complex set of post-translational modifications of histones, also called histone code, and nucleosome remodeling. Functionally, hipposin shows strong antimicrobial activity against several Gram-positive and Gram-negative bacteria. The sequence is that of Histone H2A from Hippoglossus hippoglossus (Atlantic halibut).